A 717-amino-acid chain; its full sequence is Envelope glycoprotein H (717 aa).

The first 18 residues, 1–18 (MTILQLFLVFLNILEALC), serve as a signal peptide directing secretion. Residues 19–693 (DYQLPKPRIN…AYRARLVNFI (675 aa)) lie on the Virion surface side of the membrane. Residues Asn-43, Asn-59, Asn-80, and Asn-128 are each glycosylated (N-linked (GlcNAc...) asparagine; by host). The segment at 177–239 (TPAYPTISCH…SNDVFSLVIF (63 aa)) is interaction with gL. Asn-444, Asn-560, Asn-613, and Asn-675 each carry an N-linked (GlcNAc...) asparagine; by host glycan. Residues 694–714 (IVIMVFILFLVGLYLLYKLFV) traverse the membrane as a helical segment. Over 715 to 717 (YLT) the chain is Intravirion.

The protein belongs to the herpesviridae glycoprotein H family. As to quaternary structure, interacts with glycoprotein L (gL); this interaction is necessary for the correct processing and cell surface expression of gH. The heterodimer gH/gL seems to interact with gB trimers during fusion. In terms of processing, N-glycosylated, O-glycosylated, and sialylated.

The protein resides in the virion membrane. It localises to the host cell membrane. The protein localises to the host endosome membrane. In terms of biological role, the heterodimer glycoprotein H-glycoprotein L is required for the fusion of viral and plasma membranes leading to virus entry into the host cell. Following initial binding to host receptor, membrane fusion is mediated by the fusion machinery composed of gB and the heterodimer gH/gL. May also be involved in the fusion between the virion envelope and the outer nuclear membrane during virion morphogenesis. This chain is Envelope glycoprotein H, found in Saimiriine herpesvirus 2 (strain 11) (SaHV-2).